A 188-amino-acid polypeptide reads, in one-letter code: Ion-translocating oxidoreductase complex subunit B (188 aa).

Residues 1-26 (MMSLWIAIGALSTLALVSGVVLGFAA) form a hydrophobic region. Residues 32-91 (DEDPVVEQVDAILPQSQCGQCGYPGCRPYAEAVSTGGEKINKCAPGGEQVMLKLAELLAV) enclose the 4Fe-4S domain. Positions 49, 52, 57, 74, 117, 120, 123, 127, 147, 150, 153, and 157 each coordinate [4Fe-4S] cluster. 4Fe-4S ferredoxin-type domains lie at 108–137 (KVAFIDEANCIGCTKCIQACPVDAIIGATR) and 138–167 (AMHTVLSDLCTGCDLCVAPCPTDCIEMIPV).

It belongs to the 4Fe4S bacterial-type ferredoxin family. RnfB subfamily. As to quaternary structure, the complex is composed of six subunits: RnfA, RnfB, RnfC, RnfD, RnfE and RnfG. It depends on [4Fe-4S] cluster as a cofactor.

Its subcellular location is the cell inner membrane. Part of a membrane-bound complex that couples electron transfer with translocation of ions across the membrane. This chain is Ion-translocating oxidoreductase complex subunit B, found in Yersinia pestis bv. Antiqua (strain Antiqua).